The sequence spans 411 residues: 2-acylphloroglucinol 4-prenyltransferase, chloroplastic (411 aa).

A chloroplast-targeting transit peptide spans 1–91 (MELSSVSSFS…CNDQRGNSIR (91 aa)). Transmembrane regions (helical) follow at residues 159–179 (LLGMLAILGSCFYTAGINQIF), 198–218 (ISVESAWLLTLSPAIIGFILI), 226–246 (LLTSLYCLAILSGTIYSVPPF), 253–273 (ITAFLCILMIHAGLNFSVYYA), 278–298 (LGLAFAWSPSFSFITAFITFM), 333–353 (LLGTGLLLLNYVAAISTAIIW), 356–376 (AFKSNIMLLSHAILAFSLIFQ), and 391–411 (KSFYEFIWILFSAEYVVYLFI).

It belongs to the UbiA prenyltransferase family. Mg(2+) is required as a cofactor. Expressed in glandular trichomes called lupulin glands, and in early stage and mature cones. Detected in leaves, but not in root, stem and first stage of flowers. No expression in male flowers.

The protein localises to the plastid. It localises to the chloroplast membrane. It catalyses the reaction a 2-acylphloroglucinol + dimethylallyl diphosphate = a 2-acyl-4-prenylphloroglucinol + diphosphate. Its pathway is secondary metabolite biosynthesis. Functionally, involved in the biosynthesis of prenylated phenolics natural products which contribute to the bitter taste of beer and display broad biological activities. Catalyzes the first prenylation step in the beta-bitter acid pathway. Abble to transfer dimethylallyl diphosphate (DMAPP) or geranyl diphosphate (GPP) to phlorisovalerophenone (PIVP), phlorisobutrylphenone (PIMP) and naringenin chalcone. Can also use phlorisobutyrophenone (PIBP) and phlormethylbutanophenone (PMBP) as substrates, but not 6'-O-methylated chalcone or naringenin. This chain is 2-acylphloroglucinol 4-prenyltransferase, chloroplastic, found in Humulus lupulus (European hop).